The sequence spans 101 residues: Putative pterin-4-alpha-carbinolamine dehydratase (101 aa).

Belongs to the pterin-4-alpha-carbinolamine dehydratase family.

The catalysed reaction is (4aS,6R)-4a-hydroxy-L-erythro-5,6,7,8-tetrahydrobiopterin = (6R)-L-erythro-6,7-dihydrobiopterin + H2O. This chain is Putative pterin-4-alpha-carbinolamine dehydratase, found in Ralstonia pickettii (strain 12J).